The following is a 335-amino-acid chain: Glycerol-3-phosphate dehydrogenase [NAD(P)+] (335 aa).

Positions 10, 11, 31, and 105 each coordinate NADPH. Sn-glycerol 3-phosphate contacts are provided by K105, G136, and S138. A140 is an NADPH binding site. Residues K191, D244, S254, R255, and N256 each contribute to the sn-glycerol 3-phosphate site. K191 acts as the Proton acceptor in catalysis. R255 lines the NADPH pocket. Residues V279 and E281 each coordinate NADPH.

Belongs to the NAD-dependent glycerol-3-phosphate dehydrogenase family.

Its subcellular location is the cytoplasm. The catalysed reaction is sn-glycerol 3-phosphate + NAD(+) = dihydroxyacetone phosphate + NADH + H(+). The enzyme catalyses sn-glycerol 3-phosphate + NADP(+) = dihydroxyacetone phosphate + NADPH + H(+). The protein operates within membrane lipid metabolism; glycerophospholipid metabolism. Its function is as follows. Catalyzes the reduction of the glycolytic intermediate dihydroxyacetone phosphate (DHAP) to sn-glycerol 3-phosphate (G3P), the key precursor for phospholipid synthesis. This chain is Glycerol-3-phosphate dehydrogenase [NAD(P)+], found in Leptospira borgpetersenii serovar Hardjo-bovis (strain L550).